The primary structure comprises 964 residues: DNA mismatch repair protein MSH2 (964 aa).

688 to 695 (GPNMGGKS) contacts ATP. Residues 851–964 (DQSFGIHVAE…YLKYIKALLL (114 aa)) are interaction with MSH6.

The protein belongs to the DNA mismatch repair MutS family. As to quaternary structure, heterodimer consisting of MSH2-MSH6 (MutS alpha) or MSH2-MSH3 (MutS beta). Both heterodimers form a ternary complex with MutL alpha (MLH1-PMS1). MutS beta also forms a ternary complex with MutL beta (MLH1-MLH3), and possibly with a MLH1-MLH2 heterodimer. Both heterodimers interact with proliferating cell nuclear antigen (PCNA/POL30). This interaction is disrupted upon binding of the MutS heterodimers to mismatch DNA. Interacts with SAW1.

The protein resides in the nucleus. Inhibited by Cd(2+). In terms of biological role, component of the post-replicative DNA mismatch repair system (MMR). Forms two different heterodimers: MutS alpha (MSH2-MSH6 heterodimer) and MutS beta (MSH2-MSH3 heterodimer), which bind to DNA mismatches thereby initiating DNA repair. MSH2 seems to act as a scaffold for the other MutS homologs that provide substrate-binding and substrate specificity. When bound, heterodimers bend the DNA helix and shield approximately 20 base pairs. MutS alpha acts mainly to repair base-base and single insertion-deletion mismatches that occur during replication, but can also repair longer insertion-deletion loops (IDLs), although with decreasing efficiency as the size of the extrahelical loop increases. MutS beta acts mainly to repair IDLs from 2 to 13 nucleotides in size, but can also repair base-base and single insertion-deletion mismatches. After mismatch binding, MutS alpha or beta form a ternary complex with a MutL heterodimer, which is thought to be responsible for directing the downstream MMR events, including strand discrimination, excision, and resynthesis. ATP binding and hydrolysis play a pivotal role in mismatch repair functions. Both subunits bind ATP, but with differing affinities, and their ATPase kinetics are also very different. MSH6 binds and hydrolyzes ATP rapidly, whereas MSH2 catalyzes ATP at a substantially slower rate. Binding to a mismatched base pair suppresses MSH6-catalyzed ATP hydrolysis, but not the activity of MSH2. ATP binding to both subunits is necessary to trigger a change in MutS alpha interaction with mismatched DNA, converting MutS alpha into a sliding clamp capable of hydrolysis-independent movement along DNA, and also facilitates formation of ternary complexes containing MutS and MutL proteins and the mismatch. MutS beta also has a role in regulation of heteroduplex formation during mitotic and meiotic recombination. MutS beta binds to DNA flap structures predicted to form during recombination, and is required for 3' non-homologous tail removal (NHTR). MutS beta-binding alters the DNA conformation of its substrate at the ds/ssDNA junction and may facilitate its recognition and/or cleavage by the downstream nucleotide excision repair (NER) RAD1-RAD10 endonuclease. The protein is DNA mismatch repair protein MSH2 (MSH2) of Saccharomyces cerevisiae (strain ATCC 204508 / S288c) (Baker's yeast).